Consider the following 263-residue polypeptide: Chymotrypsinogen B (263 aa).

Residues 1–18 (MAFLWLVSCFALVGATFG) form the signal peptide. Cystine bridges form between cysteine 19–cysteine 140, cysteine 60–cysteine 76, cysteine 154–cysteine 219, cysteine 186–cysteine 200, and cysteine 209–cysteine 238. Residues 34–261 (IVNGEDAIPG…LMPWVQQILE (228 aa)) enclose the Peptidase S1 domain. The active-site Charge relay system is histidine 75. At serine 93 the chain carries Phosphoserine. The active-site Charge relay system is the aspartate 120. Residue serine 213 is the Charge relay system of the active site.

The protein belongs to the peptidase S1 family.

It localises to the secreted. The protein localises to the extracellular space. The catalysed reaction is Preferential cleavage: Tyr-|-Xaa, Trp-|-Xaa, Phe-|-Xaa, Leu-|-Xaa.. This chain is Chymotrypsinogen B (Ctrb1), found in Rattus norvegicus (Rat).